A 188-amino-acid polypeptide reads, in one-letter code: UPF0398 protein BBR47_29830 (188 aa).

Belongs to the UPF0398 family.

This chain is UPF0398 protein BBR47_29830, found in Brevibacillus brevis (strain 47 / JCM 6285 / NBRC 100599).